Reading from the N-terminus, the 277-residue chain is Probable cytochrome c oxidase subunit 3 (277 aa).

A run of 6 helical transmembrane segments spans residues 20 to 40, 45 to 65, 88 to 108, 173 to 193, 211 to 231, and 255 to 275; these read PWPILTSFALLILVAGGVSFM, FNHYILAFGVISVAYCLYSWW, IGMALFILTEIMFFGVFFASF, CVTALGLTIILGIFFTCMQAY, FYLATGFHGAHVIIGTIFLIV, and AWYWHFVDVVWLFLFTFVYIF.

This sequence belongs to the cytochrome c oxidase subunit 3 family.

The protein resides in the cell membrane. It catalyses the reaction 4 Fe(II)-[cytochrome c] + O2 + 8 H(+)(in) = 4 Fe(III)-[cytochrome c] + 2 H2O + 4 H(+)(out). The sequence is that of Probable cytochrome c oxidase subunit 3 (ctaE) from Rickettsia bellii (strain RML369-C).